The following is a 412-amino-acid chain: Proline-rich protein 30 (412 aa).

Polar residues-rich tracts occupy residues 1-15 and 23-39; these read MLPQ…QTSV and GFSQ…QPLS. 3 disordered regions span residues 1–88, 123–174, and 317–412; these read MLPQ…HPYS, PLTP…SNRQ, and RPKE…KSSV. 3 stretches are compositionally biased toward low complexity: residues 50–59, 126–142, and 334–350; these read PFSSTQSRRP, PSFS…PHSP, and QLPA…ADPV. The span at 353 to 372 shows a compositional bias: polar residues; that stretch reads TPSQTRSFRSAGLQSPNSPR.

The protein is Proline-rich protein 30 (PRR30) of Homo sapiens (Human).